Here is a 1006-residue protein sequence, read N- to C-terminus: Phosphatidylinositol-3,5-bisphosphate 3-phosphatase MTMR3 (1006 aa).

A compositionally biased stretch (low complexity) spans 1-10 (MTVTSSAAID). The tract at residues 1–29 (MTVTSSAAIDIGGGGGGRRSDRLDSDRTS) is disordered. Over residues 18-29 (RRSDRLDSDRTS) the composition is skewed to basic and acidic residues. In terms of domain architecture, Myotubularin phosphatase spans 224 to 630 (AWKFSEAVDE…INLRVWHEVF (407 aa)). 3 residues coordinate a 1,2-diacyl-sn-glycero-3-phospho-(1D-myo-inositol-3,5-bisphosphate): Asn377, Asn402, and Ile403. Positions 377, 402, and 403 each coordinate a 1,2-diacyl-sn-glycero-3-phospho-(1D-myo-inositol-3-phosphate). Catalysis depends on Cys463, which acts as the Phosphocysteine intermediate. A 1,2-diacyl-sn-glycero-3-phospho-(1D-myo-inositol-3,5-bisphosphate) contacts are provided by Ser464, Asp465, Gly466, Trp467, Asp468, Arg469, Lys505, and Arg509. Residues Ser464, Asp465, Gly466, Trp467, Asp468, and Arg469 each contribute to the a 1,2-diacyl-sn-glycero-3-phospho-(1D-myo-inositol-3-phosphate) site. Arg509 lines the a 1,2-diacyl-sn-glycero-3-phospho-(1D-myo-inositol-3-phosphate) pocket. Positions 641 to 705 (FSPKEERPLS…PSDNTNSLPM (65 aa)) are disordered. Over residues 651-705 (GCTTPMNTSTSTNLVKSKSSESINSLNVDGSAKESSQQHPTCSTTPSDNTNSLPM) the composition is skewed to polar residues. The segment at 818–883 (EGESGHCAYC…ACDSCYDSMH (66 aa)) adopts an FYVE-type zinc-finger fold. Residues Cys824, Cys827, Cys845, Cys848, Cys853, Cys856, Cys875, and Cys878 each contribute to the Zn(2+) site. Positions 886–1006 (DLKLSSSSTT…DVLDVNEQPL (121 aa)) are disordered. Composition is skewed to low complexity over residues 890–901 (SSSSTTTTSSST) and 913–926 (DNNSDNVSENVSEN). Composition is skewed to basic and acidic residues over residues 933 to 954 (VEEKEAEDPIKEAESPSKETKC) and 976 to 985 (HSRDPLKSID).

Belongs to the protein-tyrosine phosphatase family. Non-receptor class myotubularin subfamily. As to expression, expressed in the body wall muscle and in eggs. Expressed in head neurons. Expressed in the intestine. Expressed in pharyngeal cells, vulval muscle cells and cells of the tail region.

The protein localises to the cytoplasm. It is found in the membrane. The enzyme catalyses a 1,2-diacyl-sn-glycero-3-phospho-(1D-myo-inositol-3,5-bisphosphate) + H2O = a 1,2-diacyl-sn-glycero-3-phospho-(1D-myo-inositol-5-phosphate) + phosphate. It catalyses the reaction a 1,2-diacyl-sn-glycero-3-phospho-(1D-myo-inositol-3-phosphate) + H2O = a 1,2-diacyl-sn-glycero-3-phospho-(1D-myo-inositol) + phosphate. It carries out the reaction 1,2-dihexadecanoyl-sn-glycero-3-phospho-(1D-myo-inositol-3-phosphate) + H2O = 1,2-dihexadecanoyl-sn-glycero-3-phospho-(1D-myo-inositol) + phosphate. The catalysed reaction is 1,2-dihexadecanoyl-sn-glycero-3-phospho-(1D-myo-inositol-3,5-phosphate) + H2O = 1,2-dihexadecanoyl-sn-glycero-3-phospho-(1D-myo-inositol-5-phosphate) + phosphate. The enzyme catalyses 1,2-dioctanoyl-sn-glycero-3-phospho-(1-D-myo-inositol-3-phosphate) + H2O = 1,2-dioctanoyl-sn-glycero-3-phospho-(1D-myo-inositol) + phosphate. Its activity is regulated as follows. Inhibited by sodium vanadate and peroxide. Preferentially dephosphorylates phosphatidylinositol 3-phosphate (PI3P), and has some activity towards phosphatidylinositol 3,5-bisphosphate (PI35P). Positively regulates autophagy and is recruited to autophagosomes by PI3P where it catalyzes PI3P turnover to promote autophagosome maturation. Thought to have a role in maintenance of muscle function. Involved in locomotion and lifespan determination. This chain is Phosphatidylinositol-3,5-bisphosphate 3-phosphatase MTMR3, found in Caenorhabditis elegans.